A 62-amino-acid chain; its full sequence is Bowman-Birk type proteinase inhibitor (62 aa).

Disulfide bonds link cysteine 8–cysteine 61, cysteine 9–cysteine 24, cysteine 12–cysteine 57, cysteine 14–cysteine 22, cysteine 31–cysteine 38, cysteine 35–cysteine 50, and cysteine 40–cysteine 48.

Forms a monomer at protein concentrations of below 1 mM. At concentrations of above 2 mM, self-associates.

Inhibits trypsin but not chymotrypsin. Inhibits the trypsin-like proteinase activity present in larvae of the crop pests Adoxophyes orana, Hyphantria cunea, Lobesia botrana and Ostrinia nubilalis. The protein is Bowman-Birk type proteinase inhibitor of Medicago scutellata (Snail medic).